We begin with the raw amino-acid sequence, 509 residues long: Pituitary homeobox homolog Ptx1 (509 aa).

The span at Asn-70–Val-98 shows a compositional bias: low complexity. 3 disordered regions span residues Asn-70–Ser-125, Gln-148–Glu-171, and Leu-204–Ser-273. Positions Arg-227 to Ser-242 are enriched in polar residues. The span at Gly-243 to Asp-258 shows a compositional bias: basic and acidic residues. Positions Lys-259–Thr-269 are enriched in basic residues. A DNA-binding region (homeobox) is located at residues Lys-262–Arg-322. The short motif at Ser-460–Ala-473 is the OAR element. Residues Thr-464–Lys-470 carry the Nuclear localization signal motif.

The protein belongs to the paired homeobox family. Bicoid subfamily.

The protein localises to the nucleus. Its function is as follows. Appears to control physiological cell functions rather than pattern formation during embryogenesis. The protein is Pituitary homeobox homolog Ptx1 (Ptx1) of Drosophila melanogaster (Fruit fly).